The primary structure comprises 313 residues: Protein FixB (313 aa).

Position 255-283 (255-283 (LYLAVGISGQIQHMVGANASQTIFAINKD)) interacts with FAD.

The protein belongs to the ETF alpha-subunit/FixB family. In terms of assembly, heterodimer of FixA and FixB.

It participates in amine and polyamine metabolism; carnitine metabolism. Required for anaerobic carnitine reduction. May bring reductant to CaiA. The polypeptide is Protein FixB (Escherichia coli O7:K1 (strain IAI39 / ExPEC)).